The sequence spans 944 residues: Isoleucine--tRNA ligase (944 aa).

Residues 58–68 (PYANGSIHIGH) carry the 'HIGH' region motif. Glu563 is a binding site for L-isoleucyl-5'-AMP. The 'KMSKS' region signature appears at 604-608 (KMSKS). Residue Lys607 participates in ATP binding. Zn(2+) is bound by residues Cys907, Cys910, Cys927, and Cys930.

The protein belongs to the class-I aminoacyl-tRNA synthetase family. IleS type 1 subfamily. In terms of assembly, monomer. Zn(2+) serves as cofactor.

It localises to the cytoplasm. The catalysed reaction is tRNA(Ile) + L-isoleucine + ATP = L-isoleucyl-tRNA(Ile) + AMP + diphosphate. Catalyzes the attachment of isoleucine to tRNA(Ile). As IleRS can inadvertently accommodate and process structurally similar amino acids such as valine, to avoid such errors it has two additional distinct tRNA(Ile)-dependent editing activities. One activity is designated as 'pretransfer' editing and involves the hydrolysis of activated Val-AMP. The other activity is designated 'posttransfer' editing and involves deacylation of mischarged Val-tRNA(Ile). This Salmonella paratyphi A (strain ATCC 9150 / SARB42) protein is Isoleucine--tRNA ligase.